The primary structure comprises 186 residues: Protein MTH_152 (186 aa).

This sequence belongs to the flavoredoxin family. In terms of assembly, homodimer. Requires FMN as cofactor.

This Methanothermobacter thermautotrophicus (strain ATCC 29096 / DSM 1053 / JCM 10044 / NBRC 100330 / Delta H) (Methanobacterium thermoautotrophicum) protein is Protein MTH_152.